A 165-amino-acid chain; its full sequence is SsrA-binding protein (165 aa).

Positions 141–165 (KLHDKRQEEKRKQADREVKSALARY) are disordered. The span at 145-159 (KRQEEKRKQADREVK) shows a compositional bias: basic and acidic residues.

The protein belongs to the SmpB family.

Its subcellular location is the cytoplasm. Required for rescue of stalled ribosomes mediated by trans-translation. Binds to transfer-messenger RNA (tmRNA), required for stable association of tmRNA with ribosomes. tmRNA and SmpB together mimic tRNA shape, replacing the anticodon stem-loop with SmpB. tmRNA is encoded by the ssrA gene; the 2 termini fold to resemble tRNA(Ala) and it encodes a 'tag peptide', a short internal open reading frame. During trans-translation Ala-aminoacylated tmRNA acts like a tRNA, entering the A-site of stalled ribosomes, displacing the stalled mRNA. The ribosome then switches to translate the ORF on the tmRNA; the nascent peptide is terminated with the 'tag peptide' encoded by the tmRNA and targeted for degradation. The ribosome is freed to recommence translation, which seems to be the essential function of trans-translation. The chain is SsrA-binding protein from Prochlorococcus marinus (strain MIT 9303).